Reading from the N-terminus, the 123-residue chain is Non-specific lipid-transfer protein 3 (123 aa).

The first 25 residues, 1–25 (MASSGQLLKLVCLVAVMCCMAVGGP), serve as a signal peptide directing secretion. Disulfide bonds link cysteine 33–cysteine 80, cysteine 43–cysteine 57, cysteine 58–cysteine 105, and cysteine 78–cysteine 119.

The protein belongs to the plant LTP family.

Plant non-specific lipid-transfer proteins transfer phospholipids as well as galactolipids across membranes. May play a role in wax or cutin deposition in the cell walls of expanding epidermal cells and certain secretory tissues. In Prunus dulcis (Almond), this protein is Non-specific lipid-transfer protein 3.